The chain runs to 207 residues: Histidine biosynthesis bifunctional protein HisIE (207 aa).

A phosphoribosyl-AMP cyclohydrolase region spans residues 1–117 (MQNFKELNEK…KISKNADFVF (117 aa)). Residues 118–207 (LARLEKLINA…ISKLKERHKA (90 aa)) form a phosphoribosyl-ATP pyrophosphohydrolase region.

In the N-terminal section; belongs to the PRA-CH family. It in the C-terminal section; belongs to the PRA-PH family.

The protein localises to the cytoplasm. The enzyme catalyses 1-(5-phospho-beta-D-ribosyl)-ATP + H2O = 1-(5-phospho-beta-D-ribosyl)-5'-AMP + diphosphate + H(+). It carries out the reaction 1-(5-phospho-beta-D-ribosyl)-5'-AMP + H2O = 1-(5-phospho-beta-D-ribosyl)-5-[(5-phospho-beta-D-ribosylamino)methylideneamino]imidazole-4-carboxamide. It participates in amino-acid biosynthesis; L-histidine biosynthesis; L-histidine from 5-phospho-alpha-D-ribose 1-diphosphate: step 2/9. It functions in the pathway amino-acid biosynthesis; L-histidine biosynthesis; L-histidine from 5-phospho-alpha-D-ribose 1-diphosphate: step 3/9. This is Histidine biosynthesis bifunctional protein HisIE (hisI) from Campylobacter jejuni subsp. jejuni serotype O:2 (strain ATCC 700819 / NCTC 11168).